We begin with the raw amino-acid sequence, 278 residues long: Bis(5'-nucleosyl)-tetraphosphatase, symmetrical (278 aa).

The protein belongs to the Ap4A hydrolase family.

It carries out the reaction P(1),P(4)-bis(5'-adenosyl) tetraphosphate + H2O = 2 ADP + 2 H(+). Functionally, hydrolyzes diadenosine 5',5'''-P1,P4-tetraphosphate to yield ADP. This chain is Bis(5'-nucleosyl)-tetraphosphatase, symmetrical, found in Buchnera aphidicola subsp. Baizongia pistaciae (strain Bp).